Here is a 28-residue protein sequence, read N- to C-terminus: Glutathione S-transferase 5 (28 aa).

The 28-residue stretch at 1–28 (PNYKLTYFNLRGRAEISRYLFAYAGIKY) folds into the GST N-terminal domain. Y7 contacts glutathione.

The protein belongs to the GST superfamily. Sigma family. As to quaternary structure, homodimer.

It is found in the cytoplasm. The enzyme catalyses RX + glutathione = an S-substituted glutathione + a halide anion + H(+). Its function is as follows. Conjugation of reduced glutathione to a wide number of exogenous and endogenous hydrophobic electrophiles. The chain is Glutathione S-transferase 5 from Gallus gallus (Chicken).